The primary structure comprises 128 residues: Holo-[acyl-carrier-protein] synthase (128 aa).

Mg(2+)-binding residues include D10 and E59.

Belongs to the P-Pant transferase superfamily. AcpS family. Mg(2+) serves as cofactor.

It localises to the cytoplasm. The enzyme catalyses apo-[ACP] + CoA = holo-[ACP] + adenosine 3',5'-bisphosphate + H(+). Its function is as follows. Transfers the 4'-phosphopantetheine moiety from coenzyme A to a Ser of acyl-carrier-protein. In Syntrophotalea carbinolica (strain DSM 2380 / NBRC 103641 / GraBd1) (Pelobacter carbinolicus), this protein is Holo-[acyl-carrier-protein] synthase.